We begin with the raw amino-acid sequence, 21 residues long: Granulitoxin (21 aa).

Positions Ala1–Thr21 are disordered.

The protein resides in the secreted. It is found in the nematocyst. Injection into mice produces severe neurotoxic effects such as circular movements, aggressive behavior, dyspnea, tonic-clonic convulsion and death. The protein is Granulitoxin of Bunodosoma cangicum (Sea anemone).